The following is a 446-amino-acid chain: Probable E3 ubiquitin-protein ligase XBOS31 (446 aa).

ANK repeat units follow at residues aspartate 46–valine 75, lysine 79–threonine 108, arginine 113–glycine 142, arginine 160–alanine 189, and proline 197–arginine 227. The RING-type zinc-finger motif lies at cysteine 317–arginine 366. The disordered stretch occupies residues threonine 376–serine 401.

The enzyme catalyses S-ubiquitinyl-[E2 ubiquitin-conjugating enzyme]-L-cysteine + [acceptor protein]-L-lysine = [E2 ubiquitin-conjugating enzyme]-L-cysteine + N(6)-ubiquitinyl-[acceptor protein]-L-lysine.. It participates in protein modification; protein ubiquitination. The protein is Probable E3 ubiquitin-protein ligase XBOS31 (XBOS31) of Oryza sativa subsp. japonica (Rice).